The chain runs to 241 residues: Major microneme antigen (241 aa).

A signal peptide spans 1–34; the sequence is MTLPIHFPRCVLYGMASAVWSILFLHILVGDTMS. Positions 35-103 are excised as a propeptide; it reads AADALSWSGG…ATGRGPSFVH (69 aa). Residues 64 to 83 show a composition bias toward basic and acidic residues; the sequence is GKELEQQHGGEEQQMQRDTK. Positions 64–90 are disordered; sequence GKELEQQHGGEEQQMQRDTKPAAFSNP. 2 consecutive PAN domains span residues 112-181 and 185-241; these read CFPH…PRSC and CTDN…VERA. Disulfide bonds link cysteine 112-cysteine 181, cysteine 137-cysteine 159, cysteine 141-cysteine 147, cysteine 185-cysteine 189, cysteine 210-cysteine 230, and cysteine 214-cysteine 220. Serine 121 is an a carbohydrate binding site. Residues lysine 162, tyrosine 169, and aspartate 174 each contribute to the a carbohydrate site.

The protein belongs to the microneme antigen family. In terms of assembly, homodimer or heterodimer of major microneme antigen and microneme antigen. Contains six disulfide bonds.

It is found in the cytoplasmic vesicle. It localises to the secretory vesicle. The protein resides in the microneme. In terms of biological role, galactose-binding lectin. Plays a role in adhesion to the host cell. Has a potential role in invasion of host cells. This is Major microneme antigen from Sarcocystis muris.